We begin with the raw amino-acid sequence, 338 residues long: Very-long-chain 3-oxoacyl-CoA reductase (338 aa).

The chain crosses the membrane as a helical span at residues 20 to 40 (LSAFLLVMGSIGVGRVIYQTL). Residues Val-66, Asn-95, Asp-120, Asn-147, Tyr-214, Lys-218, Val-247, and Ser-249 each contribute to the NADP(+) site. The active-site Proton donor is Tyr-214. The Lowers pKa of active site Tyr role is filled by Lys-218.

It belongs to the short-chain dehydrogenases/reductases (SDR) family.

The protein localises to the endoplasmic reticulum membrane. The catalysed reaction is a very-long-chain (3R)-3-hydroxyacyl-CoA + NADP(+) = a very-long-chain 3-oxoacyl-CoA + NADPH + H(+). The protein operates within lipid metabolism; fatty acid biosynthesis. Its function is as follows. Component of the microsomal membrane bound fatty acid elongation system, which produces the 26-carbon very long-chain fatty acids (VLCFA) from palmitate. Catalyzes the reduction of the 3-ketoacyl-CoA intermediate that is formed in each cycle of fatty acid elongation. VLCFAs serve as precursors for ceramide and sphingolipids. The protein is Very-long-chain 3-oxoacyl-CoA reductase of Laccaria bicolor (strain S238N-H82 / ATCC MYA-4686) (Bicoloured deceiver).